A 113-amino-acid chain; its full sequence is Mini zinc finger protein 2 (113 aa).

A ZF-HD dimerization-type; degenerate zinc finger spans residues 24-83 (YGECRRNHAASTGGHAVDGCREFIAAEDGGGGNSTSAVGVAAAALKCAACGCHRSFHRRV). The interval 93–113 (DCASGDTSSSSPSSSSSLSSE) is disordered. Positions 100–113 (SSSSPSSSSSLSSE) are enriched in low complexity.

As to quaternary structure, homo- and heterodimers.

The protein localises to the cytoplasm. Functionally, inhibits zinc finger homeodomain (ZHD) transcription factors, by interacting with them to prevent both their nuclear localization and their DNA-binding properties. The chain is Mini zinc finger protein 2 (MIF3) from Oryza sativa subsp. japonica (Rice).